Consider the following 429-residue polypeptide: Antho-RFamide neuropeptides type 2 (429 aa).

The signal sequence occupies residues 1 to 22; it reads MTTVSYVTILLTVLVQVLTSDA. Residues 23–233 constitute a propeptide that is removed on maturation; that stretch reads KATNNKRELS…EFQGRFGRED (211 aa). Positions 230–371 are enriched in basic and acidic residues; it reads GREDQGRFGR…EDIAKEDQGR (142 aa). The tract at residues 230-429 is disordered; it reads GREDQGRFGR…KSDDALAKIS (200 aa). Pyrrolidone carboxylic acid is present on Gln-234. Position 237 is a phenylalanine amide (Phe-237). Positions 239–241 are excised as a propeptide; the sequence is RED. Gln-242 carries the pyrrolidone carboxylic acid modification. A Phenylalanine amide modification is found at Phe-245. Positions 247 to 249 are excised as a propeptide; the sequence is RED. Gln-250 bears the Pyrrolidone carboxylic acid mark. Phe-253 carries the post-translational modification Phenylalanine amide. The propeptide occupies 255-257; sequence RED. The residue at position 258 (Gln-258) is a Pyrrolidone carboxylic acid. Phe-261 bears the Phenylalanine amide mark. The propeptide occupies 263–265; sequence RED. Gln-266 bears the Pyrrolidone carboxylic acid mark. A Phenylalanine amide modification is found at Phe-269. The propeptide occupies 271–273; that stretch reads RED. At Gln-274 the chain carries Pyrrolidone carboxylic acid. A Phenylalanine amide modification is found at Phe-277. A propeptide spanning residues 279 to 289 is cleaved from the precursor; it reads RELQGRFGRED. Residue Gln-290 is modified to Pyrrolidone carboxylic acid. Residue Phe-293 is modified to Phenylalanine amide. The propeptide occupies 295–297; that stretch reads RED. Gln-298 carries the pyrrolidone carboxylic acid modification. Position 301 is a phenylalanine amide (Phe-301). A propeptide spanning residues 303–305 is cleaved from the precursor; the sequence is RED. Gln-306 bears the Pyrrolidone carboxylic acid mark. Position 309 is a phenylalanine amide (Phe-309). Residues 311–321 constitute a propeptide that is removed on maturation; sequence RELQGRFGRED. Gln-322 is subject to Pyrrolidone carboxylic acid. The residue at position 325 (Phe-325) is a Phenylalanine amide. The propeptide occupies 327-329; sequence RED. The residue at position 330 (Gln-330) is a Pyrrolidone carboxylic acid. Phe-333 is subject to Phenylalanine amide. The propeptide occupies 335–342; that stretch reads REDLAKED. Gln-343 is modified (pyrrolidone carboxylic acid). At Phe-346 the chain carries Phenylalanine amide. A propeptide spanning residues 348–355 is cleaved from the precursor; it reads REDLAKED. Gln-356 bears the Pyrrolidone carboxylic acid mark. Residue Phe-359 is modified to Phenylalanine amide. The propeptide occupies 361–368; that stretch reads REDIAKED. Gln-369 carries the post-translational modification Pyrrolidone carboxylic acid. Residue Phe-372 is modified to Phenylalanine amide. Residues 374 to 429 constitute a propeptide that is removed on maturation; the sequence is RNAAAAAKKRTIDVIDIESDPKPQTRFRDGKDMQEKRKVEKKDKIEKSDDALAKIS. Residues 392-429 are compositionally biased toward basic and acidic residues; the sequence is SDPKPQTRFRDGKDMQEKRKVEKKDKIEKSDDALAKIS.

This sequence belongs to the FARP (FMRFamide related peptide) family.

The protein localises to the secreted. Its function is as follows. Not known but it could act as a transmitter at neuromuscular synapses. This Anthopleura elegantissima (Green aggregating anemone) protein is Antho-RFamide neuropeptides type 2.